An 88-amino-acid chain; its full sequence is Putative membrane protein insertion efficiency factor (88 aa).

It belongs to the UPF0161 family.

Its subcellular location is the cell membrane. Functionally, could be involved in insertion of integral membrane proteins into the membrane. This is Putative membrane protein insertion efficiency factor (yrcB) from Lactococcus lactis subsp. lactis (strain IL1403) (Streptococcus lactis).